The chain runs to 159 residues: Transmembrane protein 42 (159 aa).

A run of 4 helical transmembrane segments spans residues 37 to 57 (FWGVFNCLCAGSFGALAAASA), 59 to 79 (LAFGSEVSMGLCVLGIIVMAS), 100 to 120 (IASVTVTFSNILSSAFLGYVL), and 124 to 144 (CQEVLWWGGVFLILCGLTLIH).

The protein resides in the membrane. The chain is Transmembrane protein 42 (TMEM42) from Pongo abelii (Sumatran orangutan).